A 187-amino-acid chain; its full sequence is GTP cyclohydrolase 1 (187 aa).

The Zn(2+) site is built by cysteine 74, histidine 77, and cysteine 145.

Belongs to the GTP cyclohydrolase I family. Homomer.

The enzyme catalyses GTP + H2O = 7,8-dihydroneopterin 3'-triphosphate + formate + H(+). The protein operates within cofactor biosynthesis; 7,8-dihydroneopterin triphosphate biosynthesis; 7,8-dihydroneopterin triphosphate from GTP: step 1/1. The chain is GTP cyclohydrolase 1 from Sulfurihydrogenibium sp. (strain YO3AOP1).